The chain runs to 949 residues: Piwi-like protein 2 (949 aa).

Residues 1 to 125 (MDPTRPPFRG…SLSTRVQQAS (125 aa)) are disordered. Polar residues predominate over residues 115 to 125 (PSLSTRVQQAS). The PAZ domain maps to 366–478 (SVLDIMNILY…LLPELAFMTG (113 aa)). Positions 644–935 (LLVCLISGTR…LAFLSGQFLH (292 aa)) constitute a Piwi domain. Residues Asp-721, Glu-759, Asp-791, and His-924 contribute to the active site.

It belongs to the argonaute family. Piwi subfamily. As to quaternary structure, component of the PET complex. The cofactor is Mg(2+). Post-translationally, methylated on arginine residues; required for the interaction with Tudor domain-containing protein and subsequent localization to the meiotic nuage, also named P granule. In terms of tissue distribution, expressed in oocytes, testis and liver (at protein level).

Its subcellular location is the cytoplasm. It localises to the nucleus. Its function is as follows. Endoribonuclease that plays a central role during spermatogenesis by repressing transposable elements and preventing their mobilization, which is essential for the germline integrity. Plays an essential role in meiotic differentiation of spermatocytes, germ cell differentiation and in self-renewal of spermatogonial stem cells. Acts via the piRNA metabolic process, which mediates the repression of transposable elements during meiosis by forming complexes composed of piRNAs and Piwi proteins and govern the methylation and subsequent repression of transposons. During piRNA biosynthesis, plays a key role in the piRNA amplification loop, also named ping-pong amplification cycle, by acting as a 'slicer-competent' piRNA endoribonuclease that cleaves primary piRNAs, which are then loaded onto 'slicer-incompetent' piwil4. Piwil2 slicing produces a pre-miRNA intermediate, which is then processed in mature piRNAs, and as well as a 16 nucleotide by-product that is degraded. Required for piwil4/miwi2 nuclear localization and association with secondary piRNAs antisense. Represses circadian rhythms by promoting the stability and activity of core clock components BMAL1 and CLOCK. This Xenopus tropicalis (Western clawed frog) protein is Piwi-like protein 2 (piwil2).